Here is a 577-residue protein sequence, read N- to C-terminus: Glucose-6-phosphate 1-dehydrogenase, chloroplastic (577 aa).

The disordered stretch occupies residues 1-20; that stretch reads MGVQLRLNPCSSSSAATSPS. The N-terminal 63 residues, 1–63, are a transit peptide targeting the chloroplast; sequence MGVQLRLNPC…QPRKHFEVFS (63 aa). A compositionally biased stretch (low complexity) spans 11–20; it reads SSSSAATSPS. NADP(+) contacts are provided by residues 97–104 and Arg131; that span reads GASGDLAK. Cys149 and Cys157 are oxidised to a cystine. Lys234 is a binding site for NADP(+). D-glucose 6-phosphate is bound by residues Lys234, 264–268, Glu302, and Asp321; that span reads HYLGK. His326 (proton acceptor) is an active-site residue. Lys419 provides a ligand contact to NADP(+). Residues Lys422 and Lys427 each contribute to the D-glucose 6-phosphate site. The NADP(+) site is built by Arg428, Arg432, and Arg461. Residue Gln463 participates in D-glucose 6-phosphate binding. NADP(+) is bound by residues 469–471 and Arg554; that span reads YLK.

The protein belongs to the glucose-6-phosphate dehydrogenase family. As to quaternary structure, homodimer. Green tissues, leaves and chloroplasts.

The protein localises to the plastid. It localises to the chloroplast. The catalysed reaction is D-glucose 6-phosphate + NADP(+) = 6-phospho-D-glucono-1,5-lactone + NADPH + H(+). It functions in the pathway carbohydrate degradation; pentose phosphate pathway; D-ribulose 5-phosphate from D-glucose 6-phosphate (oxidative stage): step 1/3. With respect to regulation, regulated by metabolites. Post-translationally inactivated by cysteine-mediated redox modification via the ferredoxin-thioredoxin system in the light and this avoids futile cycles with photosynthetic CO2 fixation. In terms of biological role, catalyzes the rate-limiting step of the oxidative pentose-phosphate pathway, which represents a route for the dissimilation of carbohydrates besides glycolysis. The main function of this enzyme is to provide reducing power (NADPH) and pentose phosphates for fatty acid and nucleic acid synthesis which are involved in membrane synthesis and cell division. The polypeptide is Glucose-6-phosphate 1-dehydrogenase, chloroplastic (Solanum tuberosum (Potato)).